Here is a 163-residue protein sequence, read N- to C-terminus: Nucleotide-binding protein BLi01194 (163 aa).

This sequence belongs to the YajQ family.

Its function is as follows. Nucleotide-binding protein. The protein is Nucleotide-binding protein BLi01194 of Bacillus licheniformis (strain ATCC 14580 / DSM 13 / JCM 2505 / CCUG 7422 / NBRC 12200 / NCIMB 9375 / NCTC 10341 / NRRL NRS-1264 / Gibson 46).